Reading from the N-terminus, the 199-residue chain is MRLTAKQITWLKVCLHLAGFLPLLWLFWAINHGGLSADPVKDIQHFTGRTALKFLLATLLVSPLARYAKQPLLIRTRRLLGLWCFVWATLHLTSYALLELGIHNLALLGSELISRPYLTLGIISWLVLLALTLTSTQFAQRKLGKRWQTLHNVVYLVAILAPIHYLWSVKILSPQPVIYAALALALLALRYRKFRQWWR.

The next 4 helical transmembrane spans lie at 10–30 (WLKVCLHLAGFLPLLWLFWAI), 82–102 (LWCFVWATLHLTSYALLELGI), 116–136 (PYLTLGIISWLVLLALTLTST), and 153–173 (VVYLVAILAPIHYLWSVKILS).

It belongs to the MsrQ family. Heterodimer of a catalytic subunit (MsrP) and a heme-binding subunit (MsrQ). The cofactor is FMN. It depends on heme b as a cofactor.

The protein resides in the cell inner membrane. Functionally, part of the MsrPQ system that repairs oxidized periplasmic proteins containing methionine sulfoxide residues (Met-O), using respiratory chain electrons. Thus protects these proteins from oxidative-stress damage caused by reactive species of oxygen and chlorine generated by the host defense mechanisms. MsrPQ is essential for the maintenance of envelope integrity under bleach stress, rescuing a wide series of structurally unrelated periplasmic proteins from methionine oxidation, including the primary periplasmic chaperone SurA and the lipoprotein Pal. MsrQ provides electrons for reduction to the reductase catalytic subunit MsrP, using the quinone pool of the respiratory chain. This is Protein-methionine-sulfoxide reductase heme-binding subunit MsrQ from Salmonella agona (strain SL483).